Reading from the N-terminus, the 499-residue chain is FAD-dependent oxidoreductase domain-containing protein 1 (499 aa).

The helical transmembrane segment at 75-95 threads the bilayer; sequence ERADVVIVGGGVMGWSIAYWL.

The cofactor is FAD.

The protein resides in the mitochondrion inner membrane. In terms of biological role, required for the assembly of the mitochondrial membrane respiratory chain NADH dehydrogenase (Complex I). Involved in mid-late stages of complex I assembly. This Xenopus laevis (African clawed frog) protein is FAD-dependent oxidoreductase domain-containing protein 1 (foxred1).